The chain runs to 3082 residues: Autotransporter adhesin BadA (3082 aa).

A signal peptide spans 1–47 (MKKLSVTSKRQYNLYASPISRRLSLLMKLSLETVTVMFLLGASPVLA). The tract at residues 48–376 (SNLALTGAKN…DAVNVAQLKA (329 aa)) is binds to host cells. The interval 48-2901 (SNLALTGAKN…KVQDIATVAD (2854 aa)) is surface exposed passenger domain. Residues 53–2850 (TGAKNLSQNS…DARHNGVDSK (2798 aa)) form a does not bind host cells, no host proangiogenic cytokine induction, collagen or fibronectin, no autoagglutination region. Residues 470–2850 (ITGVAEGTDA…DARHNGVDSK (2381 aa)) are required to bind fibronectin, not required for surface expression on bacteria, bacterial autoagglutination, host cell binding, collagen binding or host proangiogenic cytokine induction. Residues 2902–3027 (SAVKYEKDST…VSNLRYYDIP (126 aa)) form an outer membrane translocation of the passenger domain region. 4 consecutive transmembrane segments (beta stranded) span residues 3028 to 3039 (GSLSLSFGTGIW), 3044 to 3051 (AFAIGAGY), 3055 to 3065 (DGNIRSNLSIT), and 3070 to 3082 (QWGV…LRLK). Positions 3028–3082 (GSLSLSFGTGIWRSQSAFAIGAGYTSEDGNIRSNLSITSSGGQWGVGAGITLRLK) are translocator domain.

Belongs to the autotransporter-2 (AT-2) (TC 1.B.40) family. Homotrimer. Crystals of the head region form trimers.

The protein localises to the cell surface. It is found in the cell outer membrane. Functionally, mediates bacterial adherence to host endothelial cells and host extracellular matrix proteins (collagen type I, III, IV, laminin and fibronectin). Static versus dynamic adherence results differ slightly; in dynamic adherence studies bacteria bind to fixed components under a constant defined flow rate to simulate in vivo infection conditions. Induces secretion of host proangiogenic cytokines such as VEGFA, ADM, IGFBP-3 and IL-8. May prevent bacterial phagocytosis by macrophages. Probably mediates bacterial autoagglutination. Negatively impacts type IV secretion system effectors (VirB/D4 T4SS and its substrate Bep proteins), possibly by preventing close association of host and bacterial cells. This implies the 2 factors are expressed at different times during infection. The chain is Autotransporter adhesin BadA from Bartonella henselae (Rochalimaea henselae).